The primary structure comprises 232 residues: Biosynthetic peptidoglycan transglycosylase (232 aa).

The chain crosses the membrane as a helical span at residues 14-34 (AAVALVLLYQLWIFAHVLWWI).

It belongs to the glycosyltransferase 51 family.

The protein resides in the cell inner membrane. It carries out the reaction [GlcNAc-(1-&gt;4)-Mur2Ac(oyl-L-Ala-gamma-D-Glu-L-Lys-D-Ala-D-Ala)](n)-di-trans,octa-cis-undecaprenyl diphosphate + beta-D-GlcNAc-(1-&gt;4)-Mur2Ac(oyl-L-Ala-gamma-D-Glu-L-Lys-D-Ala-D-Ala)-di-trans,octa-cis-undecaprenyl diphosphate = [GlcNAc-(1-&gt;4)-Mur2Ac(oyl-L-Ala-gamma-D-Glu-L-Lys-D-Ala-D-Ala)](n+1)-di-trans,octa-cis-undecaprenyl diphosphate + di-trans,octa-cis-undecaprenyl diphosphate + H(+). It functions in the pathway cell wall biogenesis; peptidoglycan biosynthesis. Functionally, peptidoglycan polymerase that catalyzes glycan chain elongation from lipid-linked precursors. This Thiobacillus denitrificans (strain ATCC 25259 / T1) protein is Biosynthetic peptidoglycan transglycosylase.